Consider the following 201-residue polypeptide: Adenylyl-sulfate kinase (201 aa).

An ATP-binding site is contributed by 35–42 (GLSGSGKS). Serine 109 functions as the Phosphoserine intermediate in the catalytic mechanism.

It belongs to the APS kinase family.

The enzyme catalyses adenosine 5'-phosphosulfate + ATP = 3'-phosphoadenylyl sulfate + ADP + H(+). Its pathway is sulfur metabolism; hydrogen sulfide biosynthesis; sulfite from sulfate: step 2/3. Its function is as follows. Catalyzes the synthesis of activated sulfate. This Escherichia coli O139:H28 (strain E24377A / ETEC) protein is Adenylyl-sulfate kinase.